The sequence spans 312 residues: ADP-L-glycero-D-manno-heptose-6-epimerase (312 aa).

Residues 10 to 11 (FI), 31 to 32 (DN), K38, K53, 75 to 79 (EGACS), and N92 contribute to the NADP(+) site. Y140 (proton acceptor) is an active-site residue. K144 lines the NADP(+) pocket. Residue N169 participates in substrate binding. V170 and K178 together coordinate NADP(+). K178 (proton acceptor) is an active-site residue. Residues S180, H187, 201 to 204 (FAGS), R209, and Y274 each bind substrate.

The protein belongs to the NAD(P)-dependent epimerase/dehydratase family. HldD subfamily. Homopentamer. NADP(+) serves as cofactor.

The catalysed reaction is ADP-D-glycero-beta-D-manno-heptose = ADP-L-glycero-beta-D-manno-heptose. It participates in nucleotide-sugar biosynthesis; ADP-L-glycero-beta-D-manno-heptose biosynthesis; ADP-L-glycero-beta-D-manno-heptose from D-glycero-beta-D-manno-heptose 7-phosphate: step 4/4. Its pathway is bacterial outer membrane biogenesis; LPS core biosynthesis. Its function is as follows. Catalyzes the interconversion between ADP-D-glycero-beta-D-manno-heptose and ADP-L-glycero-beta-D-manno-heptose via an epimerization at carbon 6 of the heptose. This Photorhabdus laumondii subsp. laumondii (strain DSM 15139 / CIP 105565 / TT01) (Photorhabdus luminescens subsp. laumondii) protein is ADP-L-glycero-D-manno-heptose-6-epimerase.